Reading from the N-terminus, the 464-residue chain is Glutamate--tRNA ligase (464 aa).

Residues 9–19 (PSPTGYLHIGG) carry the 'HIGH' region motif. A 'KMSKS' region motif is present at residues 242 to 246 (KISKR). K245 serves as a coordination point for ATP.

This sequence belongs to the class-I aminoacyl-tRNA synthetase family. Glutamate--tRNA ligase type 1 subfamily. Monomer.

The protein localises to the cytoplasm. The catalysed reaction is tRNA(Glu) + L-glutamate + ATP = L-glutamyl-tRNA(Glu) + AMP + diphosphate. Its function is as follows. Catalyzes the attachment of glutamate to tRNA(Glu) in a two-step reaction: glutamate is first activated by ATP to form Glu-AMP and then transferred to the acceptor end of tRNA(Glu). In Neisseria meningitidis serogroup A / serotype 4A (strain DSM 15465 / Z2491), this protein is Glutamate--tRNA ligase.